The primary structure comprises 325 residues: MSSVLEMLWVEKYRPRSLDDIVDQKHVVERLKQFVKQRNMPHLLFAGPPGTGKTTAAHALAHDLFGENYRQYMLELNASDERGINVIREKVKEFARSRTPPEIPFKIVLLDEADNMTSDAQQALRRLMELYSSVTRFILIANYPSKIIDPIQSRCAFFRFQPLSKQDVIERLRYIAENEGVDYEEEALDAIYEISEGDMRKAINVLQAASYLGKVTVDAVYRVVGMAKPREVREMLATALKGDFTAARSLLRKIMIEYGMSGEDVARQIHRELFSTELKMPEELRVLAADYLGEVHYRLVEGSDDDIQLSAFLAWLTMMSRKLEV.

47 to 54 (GPPGTGKT) lines the ATP pocket.

It belongs to the activator 1 small subunits family. RfcS subfamily. As to quaternary structure, heteromultimer composed of small subunits (RfcS) and large subunits (RfcL).

Functionally, part of the RFC clamp loader complex which loads the PCNA sliding clamp onto DNA. This is Replication factor C small subunit from Aeropyrum pernix (strain ATCC 700893 / DSM 11879 / JCM 9820 / NBRC 100138 / K1).